We begin with the raw amino-acid sequence, 99 residues long: UPF0213 protein spr1390 (99 aa).

The 76-residue stretch at 3-78 (HKAYMYVLEC…KRKKRPQKEE (76 aa)) folds into the GIY-YIG domain.

It belongs to the UPF0213 family.

The protein is UPF0213 protein spr1390 of Streptococcus pneumoniae (strain ATCC BAA-255 / R6).